Here is a 209-residue protein sequence, read N- to C-terminus: Ribosomal RNA large subunit methyltransferase E (209 aa).

S-adenosyl-L-methionine contacts are provided by glycine 63, tryptophan 65, aspartate 83, aspartate 99, and aspartate 124. The Proton acceptor role is filled by lysine 164.

It belongs to the class I-like SAM-binding methyltransferase superfamily. RNA methyltransferase RlmE family.

The protein localises to the cytoplasm. It catalyses the reaction uridine(2552) in 23S rRNA + S-adenosyl-L-methionine = 2'-O-methyluridine(2552) in 23S rRNA + S-adenosyl-L-homocysteine + H(+). Specifically methylates the uridine in position 2552 of 23S rRNA at the 2'-O position of the ribose in the fully assembled 50S ribosomal subunit. The protein is Ribosomal RNA large subunit methyltransferase E of Alkalilimnicola ehrlichii (strain ATCC BAA-1101 / DSM 17681 / MLHE-1).